Reading from the N-terminus, the 425-residue chain is Serine--tRNA ligase (425 aa).

228–230 (TAE) is a binding site for L-serine. 259 to 261 (RSE) serves as a coordination point for ATP. Glu282 contributes to the L-serine binding site. Residue 346-349 (EIAS) coordinates ATP. Ser382 provides a ligand contact to L-serine.

Belongs to the class-II aminoacyl-tRNA synthetase family. Type-1 seryl-tRNA synthetase subfamily. As to quaternary structure, homodimer. The tRNA molecule binds across the dimer.

It is found in the cytoplasm. The enzyme catalyses tRNA(Ser) + L-serine + ATP = L-seryl-tRNA(Ser) + AMP + diphosphate + H(+). It catalyses the reaction tRNA(Sec) + L-serine + ATP = L-seryl-tRNA(Sec) + AMP + diphosphate + H(+). Its pathway is aminoacyl-tRNA biosynthesis; selenocysteinyl-tRNA(Sec) biosynthesis; L-seryl-tRNA(Sec) from L-serine and tRNA(Sec): step 1/1. Catalyzes the attachment of serine to tRNA(Ser). Is also able to aminoacylate tRNA(Sec) with serine, to form the misacylated tRNA L-seryl-tRNA(Sec), which will be further converted into selenocysteinyl-tRNA(Sec). This is Serine--tRNA ligase from Rickettsia felis (strain ATCC VR-1525 / URRWXCal2) (Rickettsia azadi).